Consider the following 426-residue polypeptide: GTPase Obg (426 aa).

Residues 1–158 (MFVDEVEIKV…RSIRLELKLV (158 aa)) form the Obg domain. The OBG-type G domain maps to 159 to 330 (ADVGLIGFPN…LIYYTGDLLK (172 aa)). GTP contacts are provided by residues 165 to 172 (GFPNVGKS), 190 to 194 (FTTLK), 212 to 215 (DIPG), 282 to 285 (NKID), and 311 to 313 (SAA). The Mg(2+) site is built by Ser172 and Thr192. The region spanning 349-426 (DFADEEENIV…IGPMEFEYME (78 aa)) is the OCT domain.

Belongs to the TRAFAC class OBG-HflX-like GTPase superfamily. OBG GTPase family. In terms of assembly, monomer. It depends on Mg(2+) as a cofactor.

Its subcellular location is the cytoplasm. Its function is as follows. An essential GTPase which binds GTP, GDP and possibly (p)ppGpp with moderate affinity, with high nucleotide exchange rates and a fairly low GTP hydrolysis rate. Plays a role in control of the cell cycle, stress response, ribosome biogenesis and in those bacteria that undergo differentiation, in morphogenesis control. This Halothermothrix orenii (strain H 168 / OCM 544 / DSM 9562) protein is GTPase Obg.